The sequence spans 964 residues: SKI family transcriptional corepressor 1 (964 aa).

Disordered regions lie at residues 45 to 72 (TQLGPGREGSSSPNSKQELQPYSGSSAL), 278 to 365 (RTFS…GGSA), 414 to 461 (AGEP…WGHQ), 525 to 587 (AGGG…RKSS), 610 to 768 (REAY…GAAK), and 794 to 842 (LCTP…EDGL). Gly residues predominate over residues 283 to 310 (QGGGGGGANSGSGGAGKGGAGGGGGPGC). The span at 345–355 (ALGLAAAASGP) shows a compositional bias: low complexity. Composition is skewed to gly residues over residues 356–365 (AGPGGPGGSA) and 417–440 (PKGGPGTGSSGGAGTAAGAGGPGA). Residues 571-583 (SLGPLPPPPPPPA) show a composition bias toward pro residues. Over residues 652-661 (DTADEPEVDV) the composition is skewed to acidic residues. The span at 798–808 (ETHEPDKEDNH) shows a compositional bias: basic and acidic residues. Over residues 823–834 (DQRSVSQPSPAN) the composition is skewed to polar residues. A coiled-coil region spans residues 853-921 (EKDIENLARE…DTLCNELDQE (69 aa)).

This sequence belongs to the SKI family. Interacts with SMAD1, SMAD2 and SMAD3. Interacts with LBX1. Expressed in brain with higher levels in embryo than adult. Expressed by migratory precursors of Purkinje cells in the postnatal brain. Also expressed in adult testis.

Its subcellular location is the nucleus. Inhibits BMP signaling. Acts as a transcriptional corepressor of LBX1. This is SKI family transcriptional corepressor 1 (Skor1) from Mus musculus (Mouse).